A 65-amino-acid polypeptide reads, in one-letter code: MLPKMQPSAQCLIVFSLAFVLGWYVLRPGNTSCVLLITGESVRLVNCELTKDLVEAVLLRPLKHL.

Over 1-6 (MLPKMQ) the chain is Lumenal. A helical membrane pass occupies residues 7-26 (PSAQCLIVFSLAFVLGWYVL). Residues 27 to 65 (RPGNTSCVLLITGESVRLVNCELTKDLVEAVLLRPLKHL) are Cytoplasmic-facing.

The protein belongs to the Tymovirales TGBp3 protein family.

Its subcellular location is the host endoplasmic reticulum membrane. In terms of biological role, plays a role in viral cell-to-cell propagation, by facilitating genome transport to neighboring plant cells through plasmosdesmata. May induce the formation of granular vesicles derived from the Endoplasmic reticulum, which align on actin filaments. This chain is Movement protein TGBp3, found in Potato virus S (strain Peruvian).